The following is a 93-amino-acid chain: Red pigment-concentrating hormone (93 aa).

A signal peptide spans 1–21; that stretch reads MVRAVVATLLVVLVVASCVSA. Residue glutamine 22 is modified to Pyrrolidone carboxylic acid. The residue at position 29 (tryptophan 29) is a Tryptophan amide. Residues 33 to 93 constitute a propeptide that is removed on maturation; that stretch reads AAAGGEGTGM…VQCQDEEYLG (61 aa). The segment at 34–56 is disordered; that stretch reads AAGGEGTGMHPPAGAVVPPPSSL.

Belongs to the AKH/HRTH/RPCH family. As to expression, strongly expressed in the eyestalk and weakly in brain. Not expressed in other tissues tested.

The protein resides in the secreted. In terms of biological role, this hormone adapts the animal to light backgrounds by stimulating concentration of the pigment of its red body-chromatophores. The protein is Red pigment-concentrating hormone of Penaeus monodon (Giant tiger prawn).